A 535-amino-acid polypeptide reads, in one-letter code: GMP synthase [glutamine-hydrolyzing] (535 aa).

The region spanning 24–217 is the Glutamine amidotransferase type-1 domain; that stretch reads KILIVDFGSQ…VRKVAGLTGD (194 aa). Catalysis depends on cysteine 101, which acts as the Nucleophile. Residues histidine 191 and glutamate 193 contribute to the active site. Positions 218–410 constitute a GMPS ATP-PPase domain; that stretch reads WTMRAFREEA…LGLPEIFVGR (193 aa). Residue 245 to 251 participates in ATP binding; sequence SGGVDSS.

In terms of assembly, homodimer.

It carries out the reaction XMP + L-glutamine + ATP + H2O = GMP + L-glutamate + AMP + diphosphate + 2 H(+). It functions in the pathway purine metabolism; GMP biosynthesis; GMP from XMP (L-Gln route): step 1/1. Functionally, catalyzes the synthesis of GMP from XMP. The sequence is that of GMP synthase [glutamine-hydrolyzing] from Nitrobacter winogradskyi (strain ATCC 25391 / DSM 10237 / CIP 104748 / NCIMB 11846 / Nb-255).